The chain runs to 100 residues: Putative antiporter subunit mnhF2 (100 aa).

The next 3 helical transmembrane spans lie at 6–26 (TNFF…IGLF), 38–58 (VVAF…VSVI), and 62–82 (VSFL…SVSI).

This sequence belongs to the CPA3 antiporters (TC 2.A.63) subunit F family. May form a heterooligomeric complex that consists of seven subunits: mnhA2, mnhB2, mnhC2, mnhD2, mnhE2, mnhF2 and mnhG2.

Its subcellular location is the cell membrane. This chain is Putative antiporter subunit mnhF2 (mnhF2), found in Staphylococcus haemolyticus (strain JCSC1435).